A 123-amino-acid chain; its full sequence is DPEP2 neighbor protein (123 aa).

A disordered region spans residues 67 to 123 (APLATPTKAEAEKPAPRRAPKRRQATIESDKDLGCSSPKIRRLEHRGRRLTPQKLAG). A compositionally biased stretch (basic residues) spans 105–117 (KIRRLEHRGRRLT).

The chain is DPEP2 neighbor protein from Homo sapiens (Human).